Reading from the N-terminus, the 257-residue chain is Pyridoxine 5'-phosphate synthase (257 aa).

Residue N16 participates in 3-amino-2-oxopropyl phosphate binding. 18 to 19 is a 1-deoxy-D-xylulose 5-phosphate binding site; it reads DH. A 3-amino-2-oxopropyl phosphate-binding site is contributed by R27. The active-site Proton acceptor is the H52. Positions 54 and 59 each coordinate 1-deoxy-D-xylulose 5-phosphate. E79 acts as the Proton acceptor in catalysis. A 1-deoxy-D-xylulose 5-phosphate-binding site is contributed by T109. H200 acts as the Proton donor in catalysis. Residues G201 and 222-223 contribute to the 3-amino-2-oxopropyl phosphate site; that span reads GH.

This sequence belongs to the PNP synthase family. In terms of assembly, homooctamer; tetramer of dimers.

Its subcellular location is the cytoplasm. The catalysed reaction is 3-amino-2-oxopropyl phosphate + 1-deoxy-D-xylulose 5-phosphate = pyridoxine 5'-phosphate + phosphate + 2 H2O + H(+). It functions in the pathway cofactor biosynthesis; pyridoxine 5'-phosphate biosynthesis; pyridoxine 5'-phosphate from D-erythrose 4-phosphate: step 5/5. Catalyzes the complicated ring closure reaction between the two acyclic compounds 1-deoxy-D-xylulose-5-phosphate (DXP) and 3-amino-2-oxopropyl phosphate (1-amino-acetone-3-phosphate or AAP) to form pyridoxine 5'-phosphate (PNP) and inorganic phosphate. The sequence is that of Pyridoxine 5'-phosphate synthase from Burkholderia pseudomallei (strain K96243).